We begin with the raw amino-acid sequence, 329 residues long: Deoxynucleotidyltransferase terminal-interacting protein 1 (329 aa).

The segment at 1–27 (MGATGDVEQPRGPGGAERGGPELGDAG) is disordered. A compositionally biased stretch (gly residues) spans 12–22 (GPGGAERGGPE). The important for dimerization stretch occupies residues 56 to 147 (MTTSFTDPAI…RLTHELPGIK (92 aa)). The segment at residues 159 to 173 (RGSPIPKKRKGRPPG) is a DNA-binding region (a.T hook). Position 161 is a phosphoserine (Ser161). The Nuclear localization signal signature appears at 164–170 (PKKRKGR). Positions 197-316 (REGPKWDPAR…MRKYMETLRT (120 aa)) are important for DNA and nucleosome binding. The H-T-H motif DNA-binding region spans 216–237 (GSRANKALGMGGTRGRIYIKHP).

In terms of assembly, monomer and homodimer. A minor proportion may form homotrimers. Interacts with ZNF541. Interacts with the terminal deoxynucleotidyltransferase DNTT. Interacts with TRERF1. Identified in a histone deacetylase complex that contains DNTTIP1, HDAC1 and MIDEAS; this complex assembles into a tetramer that contains four copies of each protein chain. Component of a histone deacetylase complex containing DNTTIP1, ZNF541, HDAC1 and HDAC2. Identified in a complex with KCTD19, HDAC1, HDAC2 and ZNF541.

The protein resides in the nucleus. Functionally, increases DNTT terminal deoxynucleotidyltransferase activity (in vitro). Also acts as a transcriptional regulator, binding to the consensus sequence 5'-GNTGCATG-3' following an AT-tract. Associates with RAB20 promoter and positively regulates its transcription. Binds DNA and nucleosomes; may recruit HDAC1 complexes to nucleosomes or naked DNA. The sequence is that of Deoxynucleotidyltransferase terminal-interacting protein 1 (DNTTIP1) from Bos taurus (Bovine).